We begin with the raw amino-acid sequence, 370 residues long: DNA replication and repair protein RecF (370 aa).

30–37 contributes to the ATP binding site; sequence GENAQGKT.

The protein belongs to the RecF family.

The protein resides in the cytoplasm. The RecF protein is involved in DNA metabolism; it is required for DNA replication and normal SOS inducibility. RecF binds preferentially to single-stranded, linear DNA. It also seems to bind ATP. The sequence is that of DNA replication and repair protein RecF from Bacillus pumilus (strain SAFR-032).